The chain runs to 80 residues: Dermaseptin-A5 (80 aa).

The first 22 residues, 1–22, serve as a signal peptide directing secretion; it reads MAFLKKSLFLVLFLGLVSLSIC. Positions 23-43 are excised as a propeptide; sequence EEEKRENEDEEEQEDDEQSEM. The tract at residues 24–45 is disordered; it reads EEKRENEDEEEQEDDEQSEMKR. A compositionally biased stretch (acidic residues) spans 30–40; that stretch reads EDEEEQEDDEQ. Valine 77 carries the valine amide modification. The propeptide occupies 79-80; it reads EQ.

The protein belongs to the frog skin active peptide (FSAP) family. Dermaseptin subfamily. As to expression, expressed by the skin glands.

The protein localises to the secreted. Its function is as follows. Possesses a potent antimicrobial activity against Gram-positive and Gram-negative bacteria. Probably acts by disturbing membrane functions with its amphipathic structure. The chain is Dermaseptin-A5 from Agalychnis annae (Blue-sided leaf frog).